The chain runs to 494 residues: Acetyl-coenzyme A carboxylase carboxyl transferase subunit beta, chloroplastic (494 aa).

Positions leucine 230–asparagine 494 constitute a CoA carboxyltransferase N-terminal domain. Zn(2+) is bound by residues cysteine 234, cysteine 237, cysteine 253, and cysteine 256. The C4-type zinc-finger motif lies at cysteine 234 to cysteine 256.

This sequence belongs to the AccD/PCCB family. Acetyl-CoA carboxylase is a heterohexamer composed of biotin carboxyl carrier protein, biotin carboxylase and 2 subunits each of ACCase subunit alpha and ACCase plastid-coded subunit beta (accD). Zn(2+) serves as cofactor.

It localises to the plastid. Its subcellular location is the chloroplast stroma. The catalysed reaction is N(6)-carboxybiotinyl-L-lysyl-[protein] + acetyl-CoA = N(6)-biotinyl-L-lysyl-[protein] + malonyl-CoA. It participates in lipid metabolism; malonyl-CoA biosynthesis; malonyl-CoA from acetyl-CoA: step 1/1. In terms of biological role, component of the acetyl coenzyme A carboxylase (ACC) complex. Biotin carboxylase (BC) catalyzes the carboxylation of biotin on its carrier protein (BCCP) and then the CO(2) group is transferred by the transcarboxylase to acetyl-CoA to form malonyl-CoA. The sequence is that of Acetyl-coenzyme A carboxylase carboxyl transferase subunit beta, chloroplastic from Drimys granadensis.